The sequence spans 364 residues: DNA replication and repair protein RecF (364 aa).

30-37 contacts ATP; it reads GNNGQGKT.

The protein belongs to the RecF family.

The protein localises to the cytoplasm. Its function is as follows. The RecF protein is involved in DNA metabolism; it is required for DNA replication and normal SOS inducibility. RecF binds preferentially to single-stranded, linear DNA. It also seems to bind ATP. This chain is DNA replication and repair protein RecF, found in Citrifermentans bemidjiense (strain ATCC BAA-1014 / DSM 16622 / JCM 12645 / Bem) (Geobacter bemidjiensis).